Here is a 2035-residue protein sequence, read N- to C-terminus: Ral GTPase-activating protein subunit alpha-1 (2035 aa).

Residues 343-384 (LVSREESKNDTVDKADKTAEPEQSHSNTSTLTEREPSSSSLC) are disordered. Positions 345–365 (SREESKNDTVDKADKTAEPEQ) are enriched in basic and acidic residues. A compositionally biased stretch (polar residues) spans 366-384 (SHSNTSTLTEREPSSSSLC). A phosphoserine mark is found at S710 and S720. The disordered stretch occupies residues 714-754 (SFSRGWSRDQPGQAPMRQRSATTTGSPGTEKARSIVRQKTV). T753 is subject to Phosphothreonine. Phosphoserine is present on S772. Position 777 is a phosphothreonine (T777). The residue at position 796 (S796) is a Phosphoserine. Positions 807–817 (ERAKVNKEDTS) are enriched in basic and acidic residues. Disordered stretches follow at residues 807 to 834 (ERAK…SANV) and 848 to 911 (SGNA…SHSD). 2 stretches are compositionally biased toward polar residues: residues 824-833 (NSETGGSSAN) and 849-862 (GNAS…SSPG). 3 positions are modified to phosphoserine: S859, S860, and S863. Residues 894–911 (SPASAGSSDLMSSDSHSD) show a composition bias toward low complexity. Residues S985, S989, S993, and S999 each carry the phosphoserine modification. The interval 986–1008 (ESASPVHSALGSRSQTPSPSTLN) is disordered. The residue at position 1001 (T1001) is a Phosphothreonine. 2 positions are modified to phosphoserine: S1003 and S1477. The minimal domain that binds to TCF3/E12 stretch occupies residues 1326–2034 (FTNKTVAHVA…PYHHFPADAD (709 aa)). Positions 1713-1746 (SEKQENDVINAILKQYTEEKEFVEKHFNDLNMKA) form a coiled coil. The 209-residue stretch at 1795 to 2003 (LRNLDSRQCR…EERARYLQTI (209 aa)) folds into the Rap-GAP domain.

As to quaternary structure, component of the heterodimeric RalGAP1 complex with RALGAPB. Heterodimerization is required for activity. Interacts with the HLH region of TCF3/isoform E12. Highly expressed in brain, thymus and testis with lower levels in lung and spleen and barely detectable in heart or liver (at protein level).

The protein resides in the cytoplasm. It is found in the nucleus. In terms of biological role, catalytic subunit of the heterodimeric RalGAP1 complex which acts as a GTPase activator for the Ras-like small GTPases RALA and RALB. This Rattus norvegicus (Rat) protein is Ral GTPase-activating protein subunit alpha-1 (Ralgapa1).